The sequence spans 782 residues: Protein NEDD1 (782 aa).

8 WD repeats span residues 1–34 (MMSNLVEPSWRLLAASGGDTVKLFDVSADSGDPC), 41–80 (SPGCAVNSVKWNHTNLVVASTGEDKKISLWRKNGQSLGTV), 90–130 (SAEE…CIKK), 133–172 (GHTSTITGVMYNCKDEHLASVSVGGDLIVHNLASGARATE), 176–216 (PNGQ…PKMS), 220–260 (QHSA…SSSC), 262–301 (AYEAPFSSLAFGDNGYILVAGTSNGRVVFYDIRGKPQPVT), and 307–358 (SNSE…TPSA). 2 disordered regions span residues 350-393 (PLPS…WPSG) and 467-512 (PIFD…EAWG). Polar residues-rich tracts occupy residues 352 to 362 (PSTTPSASQSA), 370 to 386 (VSASTVNASSVEQTPNR), and 488 to 498 (SFGSITPTASS). Positions 753-782 (VLSSILENQAEQMKELKLLRKENQELRQRL) form a coiled coil.

In terms of tissue distribution, expressed in root meristematic cells.

The protein resides in the nucleus envelope. It is found in the chromosome. Its subcellular location is the centromere. It localises to the kinetochore. The protein localises to the cytoplasm. The protein resides in the cytoskeleton. It is found in the phragmoplast. Its subcellular location is the microtubule organizing center. Regulates microtubules organization in a centrosome-independent manner. Required for the spindle to be positioned correctly and for the function of gamma-tubulin in organizing phragmoplast microtubules. Component of active gamma-tubulin ring complexes (gamma-TuRCs) associated with cortical microtubules in interphase cells. Mediates gamma-TuRC recruitment to the nucleation sites and is important for determining the ratio of branched to parallel nucleation. May mediate the localization of GCP2 and GCP3 to the nuclear envelope. This is Protein NEDD1 from Arabidopsis thaliana (Mouse-ear cress).